The following is a 316-amino-acid chain: 4-hydroxy-3-methylbut-2-enyl diphosphate reductase (316 aa).

A [4Fe-4S] cluster-binding site is contributed by C18. Residues H47 and H80 each contribute to the (2E)-4-hydroxy-3-methylbut-2-enyl diphosphate site. Dimethylallyl diphosphate contacts are provided by H47 and H80. Isopentenyl diphosphate-binding residues include H47 and H80. C102 contacts [4Fe-4S] cluster. H130 contacts (2E)-4-hydroxy-3-methylbut-2-enyl diphosphate. Dimethylallyl diphosphate is bound at residue H130. Residue H130 coordinates isopentenyl diphosphate. E132 (proton donor) is an active-site residue. T171 provides a ligand contact to (2E)-4-hydroxy-3-methylbut-2-enyl diphosphate. Position 201 (C201) interacts with [4Fe-4S] cluster. (2E)-4-hydroxy-3-methylbut-2-enyl diphosphate is bound by residues S229, S230, N231, and S274. 4 residues coordinate dimethylallyl diphosphate: S229, S230, N231, and S274. Isopentenyl diphosphate contacts are provided by S229, S230, N231, and S274.

The protein belongs to the IspH family. The cofactor is [4Fe-4S] cluster.

The enzyme catalyses isopentenyl diphosphate + 2 oxidized [2Fe-2S]-[ferredoxin] + H2O = (2E)-4-hydroxy-3-methylbut-2-enyl diphosphate + 2 reduced [2Fe-2S]-[ferredoxin] + 2 H(+). It catalyses the reaction dimethylallyl diphosphate + 2 oxidized [2Fe-2S]-[ferredoxin] + H2O = (2E)-4-hydroxy-3-methylbut-2-enyl diphosphate + 2 reduced [2Fe-2S]-[ferredoxin] + 2 H(+). It functions in the pathway isoprenoid biosynthesis; dimethylallyl diphosphate biosynthesis; dimethylallyl diphosphate from (2E)-4-hydroxy-3-methylbutenyl diphosphate: step 1/1. It participates in isoprenoid biosynthesis; isopentenyl diphosphate biosynthesis via DXP pathway; isopentenyl diphosphate from 1-deoxy-D-xylulose 5-phosphate: step 6/6. Its function is as follows. Catalyzes the conversion of 1-hydroxy-2-methyl-2-(E)-butenyl 4-diphosphate (HMBPP) into a mixture of isopentenyl diphosphate (IPP) and dimethylallyl diphosphate (DMAPP). Acts in the terminal step of the DOXP/MEP pathway for isoprenoid precursor biosynthesis. This chain is 4-hydroxy-3-methylbut-2-enyl diphosphate reductase, found in Paracoccus denitrificans (strain Pd 1222).